A 189-amino-acid chain; its full sequence is MPRPRRFRRILGEPRVVTFSPEASDEETGVEITLDEFEAIRLRDYHDIKQKKAAEIMGISQPTFHRTLTSARGKIAAALVEGRPIILKGGDYITDRRRYKCMDCQFEWISPEKEYKKCPDCGSENINVVSAETIPRFGRGGYGRGFGAGRGAPRVCKCIECGYEAPKTPGVPCRTEKCPKCGAPMCGAD.

This sequence belongs to the UPF0251 family.

This is UPF0251 protein MTH_1178 from Methanothermobacter thermautotrophicus (strain ATCC 29096 / DSM 1053 / JCM 10044 / NBRC 100330 / Delta H) (Methanobacterium thermoautotrophicum).